Consider the following 314-residue polypeptide: DNA-directed RNA polymerase subunit alpha (314 aa).

An alpha N-terminal domain (alpha-NTD) region spans residues Met-1–Thr-228. The tract at residues Lys-245 to Asp-314 is alpha C-terminal domain (alpha-CTD).

Belongs to the RNA polymerase alpha chain family. In terms of assembly, homodimer. The RNAP catalytic core consists of 2 alpha, 1 beta, 1 beta' and 1 omega subunit. When a sigma factor is associated with the core the holoenzyme is formed, which can initiate transcription.

It carries out the reaction RNA(n) + a ribonucleoside 5'-triphosphate = RNA(n+1) + diphosphate. Its function is as follows. DNA-dependent RNA polymerase catalyzes the transcription of DNA into RNA using the four ribonucleoside triphosphates as substrates. The chain is DNA-directed RNA polymerase subunit alpha from Staphylococcus aureus (strain bovine RF122 / ET3-1).